The primary structure comprises 697 residues: Protein Niban 3 (697 aa).

The segment at 1–48 (MGPDRKEVPLSRGTQAVVVGKGRGAPGDDSSMGGRPSSPLDKQQRQHL) is disordered.

The protein belongs to the Niban family. In terms of tissue distribution, specifically expressed in B-lymphocytes.

This is Protein Niban 3 from Homo sapiens (Human).